The sequence spans 237 residues: uncharacterized protein (237 aa).

The segment at residues 1–25 (MRHIFQRLLPRRLWLAGLPCLALLG) is a signal peptide (tat-type signal). The segment at 201–237 (IERQLSTRKPAGNFSPDTPHESEKPAPSTHEVTPDEP) is disordered.

Exported by the Tat system. The position of the signal peptide cleavage has not been experimentally proven. Can also be exported by the Sec system.

This is an uncharacterized protein from Escherichia coli (strain K12).